A 245-amino-acid chain; its full sequence is Exosome complex component RRP41 (245 aa).

Residue alanine 2 is modified to N-acetylalanine.

It belongs to the RNase PH family. Component of the RNA exosome core complex (Exo-9), composed of EXOSC1, EXOSC2, EXOSC3, EXOSC4, EXOSC5, EXOSC6, EXOSC7, EXOSC8 and EXOSC9; within the complex interacts with EXOSC2, EXOSC7 and EXOSC9. The catalytically inactive RNA exosome core complex (Exo-9) associates with the catalytic subunit EXOSC10/RRP6. Exo-9 may associate with DIS3 to form the nucleolar exosome complex, or DIS3L to form the cytoplasmic exosome complex. Exo-9 is formed by a hexameric base ring consisting of the heterodimers EXOSC4-EXOSC9, EXOSC5-EXOSC8 and EXOSC6-EXOSC7, and a cap ring consisting of EXOSC1, EXOSC2 and EXOSC3. The RNA exosome complex associates with cofactors C1D/RRP47, MPHOSPH6/MPP6 and MTREX/MTR4. Interacts with DDX60. Interacts with DIS3; the interaction is direct.

It localises to the cytoplasm. It is found in the nucleus. The protein resides in the nucleolus. Its subcellular location is the nucleoplasm. Non-catalytic component of the RNA exosome complex which has 3'-&gt;5' exoribonuclease activity and participates in a multitude of cellular RNA processing and degradation events. In the nucleus, the RNA exosome complex is involved in proper maturation of stable RNA species such as rRNA, snRNA and snoRNA, in the elimination of RNA processing by-products and non-coding 'pervasive' transcripts, such as antisense RNA species and promoter-upstream transcripts (PROMPTs), and of mRNAs with processing defects, thereby limiting or excluding their export to the cytoplasm. The RNA exosome may be involved in Ig class switch recombination (CSR) and/or Ig variable region somatic hypermutation (SHM) by targeting AICDA deamination activity to transcribed dsDNA substrates. In the cytoplasm, the RNA exosome complex is involved in general mRNA turnover and specifically degrades inherently unstable mRNAs containing AU-rich elements (AREs) within their 3' untranslated regions, and in RNA surveillance pathways, preventing translation of aberrant mRNAs. It seems to be involved in degradation of histone mRNA. The catalytic inactive RNA exosome core complex of 9 subunits (Exo-9) is proposed to play a pivotal role in the binding and presentation of RNA for ribonucleolysis, and to serve as a scaffold for the association with catalytic subunits and accessory proteins or complexes. EXOSC4 binds to ARE-containing RNAs. This is Exosome complex component RRP41 (EXOSC4) from Bos taurus (Bovine).